The chain runs to 452 residues: Probable ECA polymerase (452 aa).

11 helical membrane passes run Phe-6–Phe-26, Val-37–Leu-57, Val-63–Gly-83, Val-118–Leu-138, Gly-155–Leu-175, Ala-181–Gly-201, Ile-207–Trp-227, Met-228–Tyr-248, Leu-341–Ile-361, Tyr-378–Ala-398, and Val-410–Phe-430.

It belongs to the WzyE family. As to quaternary structure, probably part of a complex composed of WzxE, WzyE and WzzE.

It is found in the cell inner membrane. Its pathway is bacterial outer membrane biogenesis; enterobacterial common antigen biosynthesis. Functionally, probably involved in the polymerization of enterobacterial common antigen (ECA) trisaccharide repeat units. The polypeptide is Probable ECA polymerase (Salmonella typhi).